The primary structure comprises 203 residues: WUSCHEL-related homeobox 3 (203 aa).

Positions 4–68 form a DNA-binding region, homeobox; WUS-type; the sequence is TPSTRWCPTP…NHKARERQRL (65 aa). Disordered regions lie at residues 73 to 95, 109 to 135, and 180 to 203; these read CARH…TAAA, LHHH…QQQQ, and STSG…TSTN. Residues 80 to 91 show a composition bias toward pro residues; that stretch reads PSPPSSTVPPAP. Over residues 109-118 the composition is skewed to basic residues; it reads LHHHHHHHHP. Composition is skewed to low complexity over residues 119–135 and 190–203; these read YAAA…QQQQ and CSSS…TSTN.

Belongs to the WUS homeobox family.

The protein resides in the nucleus. Transcription factor which may be involved in developmental processes. The sequence is that of WUSCHEL-related homeobox 3 (WOX3) from Oryza sativa subsp. indica (Rice).